A 498-amino-acid polypeptide reads, in one-letter code: MAAAAVAADQKVVTMTSLREGCACAAPPAAAAPPMPKMAAAQRVVAELREACATPAARLAEVAAAMAGEMEAGLAVEGGSSEMKMIVSYVDSLPTGGEEGSYYALDLGGTNFRVLRVRLAGGGVAERVAREVPIPPGLMSGGGATSECLFGFIASALAEFVGEEEEEGGLDGGERELGFTFSFPVHQTSIASGTLIRWTKAFAVDDAIGEDVVAALQAAMSERGLDMRVSALINDTVGTLAAGSYYDEDVVAAVILGTGTNAAYVEDATAIAKLHPSQLPASNTMVINTEWGSFASPCLPLTEFDEALDQESLNPGEQTYEKLISGMYLGEIVRRVLLKISSRCPSLLGGAGELATPFVLRTPDVSAMHHDETPDLSIVGEKLERTLGIRGTSPEARRMVVEVCDIVATRAARLAAAGIVGILKKIGRVDGGEGRRRRSVVAVDGGLFEHYGKFRRCMESAVRELLGEAAAERVVVKLASDGSGLGAALVAAAHSQRA.

Residues 39-492 enclose the Hexokinase domain; that stretch reads AAAQRVVAEL…SGLGAALVAA (454 aa). The segment at 95 to 233 is hexokinase small subdomain; the sequence is TGGEEGSYYA…GLDMRVSALI (139 aa). The ADP site is built by Gly109, Thr110, and Asn111. Residues Thr199, Lys200, Asn234, and Asp235 each coordinate D-glucose. The tract at residues 234–481 is hexokinase large subdomain; the sequence is NDTVGTLAAG…ERVVVKLASD (248 aa). Residue Thr258 participates in ADP binding. The D-glucose site is built by Asn261, Glu290, and Glu321. Gly446 is an ADP binding site.

Belongs to the hexokinase family. As to expression, highly expressed in senescent leaves.

The enzyme catalyses a D-hexose + ATP = a D-hexose 6-phosphate + ADP + H(+). It carries out the reaction D-fructose + ATP = D-fructose 6-phosphate + ADP + H(+). It catalyses the reaction D-glucose + ATP = D-glucose 6-phosphate + ADP + H(+). The protein operates within carbohydrate metabolism; hexose metabolism. It participates in carbohydrate degradation; glycolysis; D-glyceraldehyde 3-phosphate and glycerone phosphate from D-glucose: step 1/4. Functionally, fructose and glucose phosphorylating enzyme. Acts as a positive regulator of leaf senescence by mediating glucose accumulation and inducing an increase in reactive oxygen species (ROS). The protein is Hexokinase-1 (HXK1) of Oryza sativa subsp. japonica (Rice).